Reading from the N-terminus, the 383-residue chain is tRNA-specific 2-thiouridylase MnmA (383 aa).

Residues 29-36 (GMSGGVDS) and Met55 each bind ATP. The interval 115-117 (NPD) is interaction with target base in tRNA. The active-site Nucleophile is the Cys120. Residues Cys120 and Cys217 are joined by a disulfide bond. Residue Gly145 coordinates ATP. The interaction with tRNA stretch occupies residues 167–169 (KDQ). Cys217 (cysteine persulfide intermediate) is an active-site residue. The segment at 329–330 (RY) is interaction with tRNA.

Belongs to the MnmA/TRMU family.

It localises to the cytoplasm. It carries out the reaction S-sulfanyl-L-cysteinyl-[protein] + uridine(34) in tRNA + AH2 + ATP = 2-thiouridine(34) in tRNA + L-cysteinyl-[protein] + A + AMP + diphosphate + H(+). Functionally, catalyzes the 2-thiolation of uridine at the wobble position (U34) of tRNA, leading to the formation of s(2)U34. The sequence is that of tRNA-specific 2-thiouridylase MnmA from Histophilus somni (strain 129Pt) (Haemophilus somnus).